Here is a 338-residue protein sequence, read N- to C-terminus: MAILVTGGAGYIGSHTVVELLNVGKEVVVLDNLCNSSPKSLERVKQITGKEAKFYEGDILDRALLQKIFAENEINSVIHFAGLKAVGESVQKPTEYYMNNVAGTLVLIQEMKKAGVWNFVFSSSATVYGDPKIIPITEDCEVGGTTNPYGTSKYMVEQILRDTAKAEPKFSMTILRYFNPVGAHESGLIGEDPNGIPNNLLPYISQVAIGKLAQLSVFGSDYDTHDGTGVRDYIHVVDLAVGHLKALQRHENDAGLHIYNLGTGHGYSVLDMVKAFEKANNITIAYKLVERRSGDIATCYSDPSLAAKELGWVAERGLEKMMQDTWNWQKNNPKGYRD.

NAD(+)-binding positions include tyrosine 11 to isoleucine 12, aspartate 31 to serine 36, aspartate 58 to isoleucine 59, phenylalanine 80 to lysine 84, asparagine 99, serine 124, tyrosine 149, lysine 153, and phenylalanine 178. Substrate contacts are provided by serine 124 and tyrosine 149. Tyrosine 149 serves as the catalytic Proton acceptor. Substrate is bound by residues asparagine 179, asparagine 199–leucine 200, serine 216–phenylalanine 218, arginine 231, and arginine 292–aspartate 295.

It belongs to the NAD(P)-dependent epimerase/dehydratase family. In terms of assembly, homodimer. Requires NAD(+) as cofactor.

The catalysed reaction is UDP-alpha-D-glucose = UDP-alpha-D-galactose. The protein operates within carbohydrate metabolism; galactose metabolism. In terms of biological role, involved in the metabolism of galactose. Catalyzes the conversion of UDP-galactose (UDP-Gal) to UDP-glucose (UDP-Glc) through a mechanism involving the transient reduction of NAD. By controlling the internal galactose concentration, it may be linked to the biosynthesis of lipopolysaccharide surface molecules, which are important for the pathogenesis of H.influenzae. The polypeptide is UDP-glucose 4-epimerase (galE) (Haemophilus influenzae (strain ATCC 51907 / DSM 11121 / KW20 / Rd)).